Consider the following 215-residue polypeptide: MSLVSESHAEELVRGAGQLGIPLDDRQQRLLLAYLALLIKWNKAYNLTAVRDPDEMVSRHLLDSLSVVPFVAERGRNWLDVGSGGGMPGVPLAIMFPERAFTLLDSNGKKTRFLTQVKLELKLANLEVVHARVEQFQPSTAFDGITSRAFSSLEDFASWTRHLGNAETRWLAMKGVQPDDELQRLPEDFRLDACHVLKVPGCQGQRHLLILRRTS.

Residues Gly-82, Met-87, 133–134 (VE), and Arg-148 each bind S-adenosyl-L-methionine.

This sequence belongs to the methyltransferase superfamily. RNA methyltransferase RsmG family.

The protein localises to the cytoplasm. The catalysed reaction is guanosine(527) in 16S rRNA + S-adenosyl-L-methionine = N(7)-methylguanosine(527) in 16S rRNA + S-adenosyl-L-homocysteine. In terms of biological role, specifically methylates the N7 position of guanine in position 527 of 16S rRNA. In Stutzerimonas stutzeri (strain A1501) (Pseudomonas stutzeri), this protein is Ribosomal RNA small subunit methyltransferase G.